A 119-amino-acid polypeptide reads, in one-letter code: uncharacterized protein (119 aa).

This is an uncharacterized protein from Shigella flexneri.